The sequence spans 342 residues: Phosphate acyltransferase (342 aa).

This sequence belongs to the PlsX family. In terms of assembly, homodimer. Probably interacts with PlsY.

It localises to the cytoplasm. The enzyme catalyses a fatty acyl-[ACP] + phosphate = an acyl phosphate + holo-[ACP]. It participates in lipid metabolism; phospholipid metabolism. Its function is as follows. Catalyzes the reversible formation of acyl-phosphate (acyl-PO(4)) from acyl-[acyl-carrier-protein] (acyl-ACP). This enzyme utilizes acyl-ACP as fatty acyl donor, but not acyl-CoA. In Shewanella sp. (strain ANA-3), this protein is Phosphate acyltransferase.